The chain runs to 364 residues: Phosphoserine aminotransferase (364 aa).

An L-glutamate-binding site is contributed by Arg46. Residues 80–81 (AR), Trp106, Thr157, Asp176, and Gln199 contribute to the pyridoxal 5'-phosphate site. The residue at position 200 (Lys200) is an N6-(pyridoxal phosphate)lysine. 241-242 (NT) serves as a coordination point for pyridoxal 5'-phosphate.

This sequence belongs to the class-V pyridoxal-phosphate-dependent aminotransferase family. SerC subfamily. Homodimer. It depends on pyridoxal 5'-phosphate as a cofactor.

It localises to the cytoplasm. It catalyses the reaction O-phospho-L-serine + 2-oxoglutarate = 3-phosphooxypyruvate + L-glutamate. The catalysed reaction is 4-(phosphooxy)-L-threonine + 2-oxoglutarate = (R)-3-hydroxy-2-oxo-4-phosphooxybutanoate + L-glutamate. It functions in the pathway amino-acid biosynthesis; L-serine biosynthesis; L-serine from 3-phospho-D-glycerate: step 2/3. It participates in cofactor biosynthesis; pyridoxine 5'-phosphate biosynthesis; pyridoxine 5'-phosphate from D-erythrose 4-phosphate: step 3/5. Catalyzes the reversible conversion of 3-phosphohydroxypyruvate to phosphoserine and of 3-hydroxy-2-oxo-4-phosphonooxybutanoate to phosphohydroxythreonine. The chain is Phosphoserine aminotransferase from Vibrio cholerae serotype O1 (strain ATCC 39315 / El Tor Inaba N16961).